The sequence spans 766 residues: MGEVQLVLAVTAILISFKCLLIPAYVSTDFEVHRNWMAVTWQRPLCEWYTEATSEWTLDYPPFFAYFELGLASVAHFFGFDECLVISKTPRFSRRILIFQRFSVIFCDILYIAVCALYSFRSPRLVSRIPKKLQQNGREACFVLLASLQALIICDSIHFQYNSMLTAIFLMSLFFIDTERYLMAALSYSILLNFKHIYVYYALGYVFYYLVNYFQFSGNVLLANTPKAISLAIALLIPFCASIFPFIHASGVQGLQNIATRLFPVSRGLTHAYWAPNFWALYNFADLCLYRVLSLLKIGKFDAPTYTSGLVQEYSHSVLPNVSPMGTLCLVVISSMIVLTGLVIRRKDSADFSLFAVFSAFCFFYFGYHVHEKAIILVTVPMTVFAIKNPKYHSILIHLTCIASFSLFPLLFTPFETLLKYAICVSYFFIQLVFLKRVTLMPLSDLIPTRHVASWLLMGMVEVYNTFLHKWLWTSRLPFAPLMAISILTAIELTGLIGALIWSTFGDGIFEIWWAKATCQIRERLIRDSTYSVQAVEDLDDVKLVAGIDTSAAKLNSDMVYISVSFWTYPDLKHVATISDTRMLELPYIPQYLAVREAEVMADFLKSVITERPELRPDVILCDGFGEFHSRGCGMACHVGALSGIASIGVAKNLTLHHTYETIGMENKSKVDSFVEHCREVYKNNKTSPGFIPFDIVEPVVLNILRMGSSMNGVFVSAGYGIDLELSTEICSQLLLNNTTIEPIRAADLESRRLVRENFDGNEKLE.

Transmembrane regions (helical) follow at residues 6 to 26 (LVLA…PAYV), 60 to 80 (YPPF…FFGF), 96 to 116 (ILIF…AVCA), 156 to 176 (SIHF…LFFI), 190 to 210 (ILLN…FYYL), 228 to 248 (AISL…PFIH), 324 to 344 (PMGT…GLVI), 350 to 370 (ADFS…GYHV), 395 to 415 (ILIH…FTPF), 423 to 443 (ICVS…LMPL), 452 to 472 (VASW…HKWL), and 482 to 502 (LMAI…ALIW).

It belongs to the ALG6/ALG8 glucosyltransferase family.

The protein resides in the endoplasmic reticulum membrane. It carries out the reaction an alpha-D-Glc-(1-&gt;3)-alpha-D-Man-(1-&gt;2)-alpha-D-Man-(1-&gt;2)-alpha-D-Man-(1-&gt;3)-[alpha-D-Man-(1-&gt;2)-alpha-D-Man-(1-&gt;3)-[alpha-D-Man-(1-&gt;2)-alpha-D-Man-(1-&gt;6)]-alpha-D-Man-(1-&gt;6)]-beta-D-Man-(1-&gt;4)-beta-D-GlcNAc-(1-&gt;4)-alpha-D-GlcNAc-diphospho-di-trans,poly-cis-dolichol + a di-trans,poly-cis-dolichyl beta-D-glucosyl phosphate = an alpha-D-Glc-(1-&gt;3)-alpha-D-Glc-(1-&gt;3)-alpha-D-Man-(1-&gt;2)-alpha-D-Man-(1-&gt;2)-alpha-D-Man-(1-&gt;3)-[alpha-D-Man-(1-&gt;2)-alpha-D-Man-(1-&gt;3)-[alpha-D-Man-(1-&gt;2)-alpha-D-Man-(1-&gt;6)]-alpha-D-Man-(1-&gt;6)]-beta-D-Man-(1-&gt;4)-beta-D-GlcNAc-(1-&gt;4)-alpha-D-GlcNAc-diphospho-di-trans,poly-cis-dolichol + a di-trans,poly-cis-dolichyl phosphate + H(+). Its pathway is protein modification; protein glycosylation. Its function is as follows. Dolichyl pyrophosphate Glc1Man9GlcNAc2 alpha-1,3-glucosyltransferase that operates in the biosynthetic pathway of dolichol-linked oligosaccharides, the glycan precursors employed in protein asparagine (N)-glycosylation. The assembly of dolichol-linked oligosaccharides begins on the cytosolic side of the endoplasmic reticulum membrane and finishes in its lumen. The sequential addition of sugars to dolichol pyrophosphate produces dolichol-linked oligosaccharides containing fourteen sugars, including two GlcNAcs, nine mannoses and three glucoses. Once assembled, the oligosaccharide is transferred from the lipid to nascent proteins by oligosaccharyltransferases. In the lumen of the endoplasmic reticulum, adds the second glucose residue from dolichyl phosphate glucose (Dol-P-Glc) onto the lipid-linked oligosaccharide intermediate Glc(1)Man(9)GlcNAc(2)-PP-Dol to produce Glc(2)Man(9)GlcNAc(2)-PP-Dol. The polypeptide is Dolichyl pyrophosphate Glc1Man9GlcNAc2 alpha-1,3-glucosyltransferase (Caenorhabditis elegans).